The primary structure comprises 159 residues: Transcriptional repressor NrdR (159 aa).

Residues 3–34 (CPTCQNTDSRVLESRSADTGKSVRRRRECLNC) fold into a zinc finger. Residues 49–139 (ISVIKKDGSR…VYRKFNGVKD (91 aa)) enclose the ATP-cone domain.

This sequence belongs to the NrdR family. Requires Zn(2+) as cofactor.

Functionally, negatively regulates transcription of bacterial ribonucleotide reductase nrd genes and operons by binding to NrdR-boxes. The sequence is that of Transcriptional repressor NrdR from Prochlorococcus marinus subsp. pastoris (strain CCMP1986 / NIES-2087 / MED4).